We begin with the raw amino-acid sequence, 252 residues long: Transcription factor bHLH117 (252 aa).

Positions 103-141 are disordered; the sequence is LFPSLSPPLPAAKRQKLNSTSSSTTSGSPTASNDGGIIT. Low complexity predominate over residues 121–134; the sequence is STSSSTTSGSPTAS. The bHLH domain occupies 130–179; sequence SPTASNDGGIITKRRKISDKIRSLEKLMPWERKMNLAMTLEESHKYIKFL.

Homodimer.

The protein resides in the nucleus. This Arabidopsis thaliana (Mouse-ear cress) protein is Transcription factor bHLH117 (BHLH117).